Here is a 480-residue protein sequence, read N- to C-terminus: Cysteine--tRNA ligase (480 aa).

Cys-27 contributes to the Zn(2+) binding site. Residues 29-39 carry the 'HIGH' region motif; sequence PTVYNYAHIGN. Zn(2+)-binding residues include Cys-221, His-246, and Glu-250. The 'KMSKS' region motif lies at 278–282; sequence KMSKS. Residue Lys-281 participates in ATP binding.

The protein belongs to the class-I aminoacyl-tRNA synthetase family. As to quaternary structure, monomer. Requires Zn(2+) as cofactor.

The protein localises to the cytoplasm. The enzyme catalyses tRNA(Cys) + L-cysteine + ATP = L-cysteinyl-tRNA(Cys) + AMP + diphosphate. This is Cysteine--tRNA ligase from Borreliella burgdorferi (strain ZS7) (Borrelia burgdorferi).